Here is a 252-residue protein sequence, read N- to C-terminus: MTTLEAVILGIVEGLTEFLPISSTGHLILVSNLLGIQQTEQHKAFEVSIQLGSILAVVFLYFKKFLDTNLMKRILIAFIPTGILGFVLYKIIKSLFNPYIVVFMLVFGGLLLILIELYHKNKSYDINSIYEVPYQKAFLIGVFQSLAMVPGTSRSGATIVGGLLLGLDRKTAAEFSFMLAVPTMFMATFYDVYKNRSNFNLSDWENLIVGFVVAFISALFAIKWLLKFISNHSFIPFGIYRIILGILYYLWY.

A run of 7 helical transmembrane segments spans residues 1 to 21, 42 to 62, 74 to 94, 95 to 115, 172 to 192, 206 to 226, and 232 to 252; these read MTTL…FLPI, HKAF…FLYF, ILIA…IIKS, LFNP…LILI, AAEF…FYDV, NLIV…KWLL, and HSFI…YLWY.

It belongs to the UppP family.

Its subcellular location is the cell inner membrane. The catalysed reaction is di-trans,octa-cis-undecaprenyl diphosphate + H2O = di-trans,octa-cis-undecaprenyl phosphate + phosphate + H(+). Its function is as follows. Catalyzes the dephosphorylation of undecaprenyl diphosphate (UPP). Confers resistance to bacitracin. The protein is Undecaprenyl-diphosphatase of Sulfurihydrogenibium sp. (strain YO3AOP1).